A 583-amino-acid chain; its full sequence is MPRGLELLIAQTILQGFDAQYGRFLEVTSGAQQRFEQADWHAVQQAMKSRIHLYDHHVGLVVEQLRCITDGKSTDADFLLRVKEHYTRLLPDYPRFEIAESFFNSVYCRLFDHRSLTPERLFIFSSQPERRFRTIPRPLAKDFFPDHGWEPLLMRILSDLPLRLPWQNKSRDIRYIIAHLTETLGEDALPRCHVQVANELFYRNKAAWLVGKLTTPDGTLPFLLPIHRTDEGELFVDTCLTTTAEASIVFGFARSYFMVYAPLPAALVEWLREILPGKTTAELYMAIGCQKHAKTESYREYLCYLAESDEKFIEAPGIRGMVMLVFTLPGFDRVFKIIKDKFAPQKEMSAAHVRACYQLVKEHDRVGRMADTQEFENFVLDKRQIDPALMALLRQEVPEKITDLGEHIVIRHLYIERRMVPLNIWLEQVEGQQLRDAIEEYGNAIRQLAAANIFPGDMLFKNFGVTRHGRVVFYDYDEICYMTEVNFRDIPPARYPEDELASEPWYSVSPGDVFPEEFRHWLCADPRIGPLFEEMHADLFRADYWRALQTRIKEGHVEDVYAYRRRQRFSVRYGAISSTANSS.

Residues 315 to 321 (APGIRGM) and lysine 336 contribute to the ATP site. The active site involves aspartate 371.

It belongs to the AceK family.

The protein localises to the cytoplasm. It carries out the reaction L-seryl-[isocitrate dehydrogenase] + ATP = O-phospho-L-seryl-[isocitrate dehydrogenase] + ADP + H(+). In terms of biological role, bifunctional enzyme which can phosphorylate or dephosphorylate isocitrate dehydrogenase (IDH) on a specific serine residue. This is a regulatory mechanism which enables bacteria to bypass the Krebs cycle via the glyoxylate shunt in response to the source of carbon. When bacteria are grown on glucose, IDH is fully active and unphosphorylated, but when grown on acetate or ethanol, the activity of IDH declines drastically concomitant with its phosphorylation. This chain is Isocitrate dehydrogenase kinase/phosphatase, found in Salmonella enteritidis PT4 (strain P125109).